Here is a 474-residue protein sequence, read N- to C-terminus: Eukaryotic translation initiation factor 3 subunit L (474 aa).

Positions 255–449 (DAIRMFSHIL…DLDYALQGDL (195 aa)) constitute a PCI domain.

This sequence belongs to the eIF-3 subunit L family. Component of the eukaryotic translation initiation factor 3 (eIF-3) complex.

The protein localises to the cytoplasm. Its function is as follows. Component of the eukaryotic translation initiation factor 3 (eIF-3) complex, which is involved in protein synthesis of a specialized repertoire of mRNAs and, together with other initiation factors, stimulates binding of mRNA and methionyl-tRNAi to the 40S ribosome. The eIF-3 complex specifically targets and initiates translation of a subset of mRNAs involved in cell proliferation. The sequence is that of Eukaryotic translation initiation factor 3 subunit L from Neurospora crassa (strain ATCC 24698 / 74-OR23-1A / CBS 708.71 / DSM 1257 / FGSC 987).